A 435-amino-acid chain; its full sequence is Tol-Pal system protein TolB (435 aa).

Positions 1-26 (MKTFSLLRILIVLVGMAGAFATPAMA) are cleaved as a signal peptide.

This sequence belongs to the TolB family. In terms of assembly, the Tol-Pal system is composed of five core proteins: the inner membrane proteins TolA, TolQ and TolR, the periplasmic protein TolB and the outer membrane protein Pal. They form a network linking the inner and outer membranes and the peptidoglycan layer.

It localises to the periplasm. In terms of biological role, part of the Tol-Pal system, which plays a role in outer membrane invagination during cell division and is important for maintaining outer membrane integrity. The chain is Tol-Pal system protein TolB from Allorhizobium ampelinum (strain ATCC BAA-846 / DSM 112012 / S4) (Agrobacterium vitis (strain S4)).